A 251-amino-acid polypeptide reads, in one-letter code: Putative F-box protein L166 (251 aa).

In terms of domain architecture, F-box spans 1–46; sequence MDNICELFDEILPLIIEYLSDHDKVKFMTTCSRLYYFIDKVYYENI. The segment at 188–251 is disordered; that stretch reads PEPESQENFR…RPKSFMKYRR (64 aa). The span at 202–217 shows a compositional bias: polar residues; the sequence is TESNNNKPVNKSQPQI. Positions 241 to 251 are enriched in basic residues; the sequence is KRPKSFMKYRR.

This chain is Putative F-box protein L166, found in Acanthamoeba polyphaga (Amoeba).